The following is a 308-amino-acid chain: Regulating synaptic membrane exocytosis protein 3 (308 aa).

Positions 86-120 (STETGIAVEMRSRVTRQGSRESTDGSTNSNSSDGT) are disordered. Over residues 109–120 (DGSTNSNSSDGT) the composition is skewed to low complexity. The C2 domain maps to 156–274 (PMGDVHIAIM…DLSAAVTGWY (119 aa)). Residues serine 295 and serine 298 each carry the phosphoserine modification.

As to quaternary structure, binds PPFIA3. Does not bind RAB3.

The protein resides in the synapse. Its function is as follows. Regulates synaptic membrane exocytosis. In Homo sapiens (Human), this protein is Regulating synaptic membrane exocytosis protein 3 (RIMS3).